Reading from the N-terminus, the 250-residue chain is Ubiquinone/menaquinone biosynthesis C-methyltransferase UbiE (250 aa).

S-adenosyl-L-methionine is bound by residues Thr74, Asp94, 122-123 (DA), and Ser139.

Belongs to the class I-like SAM-binding methyltransferase superfamily. MenG/UbiE family.

It carries out the reaction a 2-demethylmenaquinol + S-adenosyl-L-methionine = a menaquinol + S-adenosyl-L-homocysteine + H(+). It catalyses the reaction a 2-methoxy-6-(all-trans-polyprenyl)benzene-1,4-diol + S-adenosyl-L-methionine = a 5-methoxy-2-methyl-3-(all-trans-polyprenyl)benzene-1,4-diol + S-adenosyl-L-homocysteine + H(+). It participates in quinol/quinone metabolism; menaquinone biosynthesis; menaquinol from 1,4-dihydroxy-2-naphthoate: step 2/2. The protein operates within cofactor biosynthesis; ubiquinone biosynthesis. Methyltransferase required for the conversion of demethylmenaquinol (DMKH2) to menaquinol (MKH2) and the conversion of 2-polyprenyl-6-methoxy-1,4-benzoquinol (DDMQH2) to 2-polyprenyl-3-methyl-6-methoxy-1,4-benzoquinol (DMQH2). The polypeptide is Ubiquinone/menaquinone biosynthesis C-methyltransferase UbiE (Cereibacter sphaeroides (strain ATCC 17029 / ATH 2.4.9) (Rhodobacter sphaeroides)).